The sequence spans 207 residues: p-benzoquinone reductase (207 aa).

The Flavodoxin-like domain occupies 5 to 196 (IQIVFYSSYG…QIARFQGKHV (192 aa)). FMN is bound by residues 11–16 (SSYGHI), 84–86 (TRF), 119–125 (STASQHG), and histidine 140. Tyrosine 13 lines the NADP(+) pocket.

Belongs to the WrbA family. In terms of assembly, homodimer. FMN serves as cofactor.

It carries out the reaction 1,4-benzoquinone + NADPH + H(+) = hydroquinone + NADP(+). It participates in xenobiotic degradation; 4-nitrophenol degradation. Its function is as follows. Involved in the degradation of para-nitrophenol (PNP). Catalyzes the reduction of p-benzoquinone to hydroquinone. The sequence is that of p-benzoquinone reductase (pnpB) from Pseudomonas sp. (strain WBC-3).